Here is a 605-residue protein sequence, read N- to C-terminus: Ankyrin repeat domain-containing protein 13D (605 aa).

ANK repeat units lie at residues 39 to 68 and 72 to 101; these read RGRT…NVGK and QGWA…YQRA. Residues 306–333 are disordered; that stretch reads AQQHSSHTGAPVQQAASPTNPTAISPEE. The segment covering 319–328 has biased composition (polar residues); it reads QAASPTNPTA. UIM domains follow at residues 482–501 and 528–547; these read EDDD…AGTE and EEQL…STEP. The disordered stretch occupies residues 541-605; it reads LQLSTEPRGP…RILQLSLTEH (65 aa). Residues 550–563 show a composition bias toward pro residues; the sequence is PGSPPRTPPAPGPP. Position 552 is a phosphoserine (Ser-552). At Thr-556 the chain carries Phosphothreonine. Low complexity predominate over residues 564–575; it reads SFEEQLRLALEL. 2 UIM domains span residues 564–583 and 589–605; these read SFEE…QEER and QEEE…LTEH. Residues 576-589 are compositionally biased toward basic and acidic residues; that stretch reads SSREQEERERRGQQ.

Interacts with EGFR (ubiquitinated); the interaction is direct and may regulate EGFR internalization.

Its subcellular location is the cell membrane. It localises to the late endosome. Functionally, ubiquitin-binding protein that specifically recognizes and binds 'Lys-63'-linked ubiquitin. Does not bind 'Lys-48'-linked ubiquitin. Positively regulates the internalization of ligand-activated EGFR by binding to the Ub moiety of ubiquitinated EGFR at the cell membrane. The chain is Ankyrin repeat domain-containing protein 13D (ANKRD13D) from Homo sapiens (Human).